The following is a 376-amino-acid chain: Chaperone protein DnaJ (376 aa).

The J domain occupies 4–70 (DYYQILGVSK…QKRAAYDRFG (67 aa)). Residues 139-217 (GVEKNISFSS…CHGLGRYHKQ (79 aa)) form a CR-type zinc finger. Zn(2+)-binding residues include C152, C155, C169, C172, C191, C194, C205, and C208. 4 CXXCXGXG motif repeats span residues 152–159 (CDTCHGSG), 169–176 (CDACGGVG), 191–198 (CHKCQGNG), and 205–212 (CKKCHGLG).

This sequence belongs to the DnaJ family. In terms of assembly, homodimer. The cofactor is Zn(2+).

Its subcellular location is the cytoplasm. In terms of biological role, participates actively in the response to hyperosmotic and heat shock by preventing the aggregation of stress-denatured proteins and by disaggregating proteins, also in an autonomous, DnaK-independent fashion. Unfolded proteins bind initially to DnaJ; upon interaction with the DnaJ-bound protein, DnaK hydrolyzes its bound ATP, resulting in the formation of a stable complex. GrpE releases ADP from DnaK; ATP binding to DnaK triggers the release of the substrate protein, thus completing the reaction cycle. Several rounds of ATP-dependent interactions between DnaJ, DnaK and GrpE are required for fully efficient folding. Also involved, together with DnaK and GrpE, in the DNA replication of plasmids through activation of initiation proteins. The sequence is that of Chaperone protein DnaJ from Rickettsia bellii (strain RML369-C).